The primary structure comprises 235 residues: MAHQPPNRPPLIGDPSGPAPPYPFRMSGLVISGFGRGSKELGIPTANLPVDDAQTPWISSIPSGVYFGWASLNLPASHPDSLTSSAAAAAAAAAAAAAPGEDGGGAGEQRQRGGNGFAVYPMVMSIGYNPFYKNTVRSAEVHVLHRFGADFYGVEMRLLIAGFIREEKDYSGLEALIADIEFDCEVAKRSLAREGWAPSGVDVEVDVPGEGVKVLRGSLECGWLIRPDELGEGGK.

Residues T45 and N47 each contribute to the Mg(2+) site. The active-site Nucleophile is the E140.

Belongs to the flavokinase family. Zn(2+) is required as a cofactor. Mg(2+) serves as cofactor.

It carries out the reaction riboflavin + ATP = FMN + ADP + H(+). It functions in the pathway cofactor biosynthesis; FMN biosynthesis; FMN from riboflavin (ATP route): step 1/1. Its function is as follows. Catalyzes the phosphorylation of riboflavin (vitamin B2) to form flavin mononucleotide (FMN) coenzyme. The polypeptide is Riboflavin kinase (FMN1) (Chaetomium globosum (strain ATCC 6205 / CBS 148.51 / DSM 1962 / NBRC 6347 / NRRL 1970) (Soil fungus)).